A 430-amino-acid chain; its full sequence is UDP-N-acetylglucosamine 1-carboxyvinyltransferase (430 aa).

22–23 (KN) is a binding site for phosphoenolpyruvate. Position 102 (R102) interacts with UDP-N-acetyl-alpha-D-glucosamine. C126 serves as the catalytic Proton donor. 2-(S-cysteinyl)pyruvic acid O-phosphothioketal is present on C126. Residues 131–135 (RPVDL), 172–175 (KVSV), D317, and I339 each bind UDP-N-acetyl-alpha-D-glucosamine.

The protein belongs to the EPSP synthase family. MurA subfamily.

It is found in the cytoplasm. The enzyme catalyses phosphoenolpyruvate + UDP-N-acetyl-alpha-D-glucosamine = UDP-N-acetyl-3-O-(1-carboxyvinyl)-alpha-D-glucosamine + phosphate. Its pathway is cell wall biogenesis; peptidoglycan biosynthesis. In terms of biological role, cell wall formation. Adds enolpyruvyl to UDP-N-acetylglucosamine. The sequence is that of UDP-N-acetylglucosamine 1-carboxyvinyltransferase from Agrobacterium fabrum (strain C58 / ATCC 33970) (Agrobacterium tumefaciens (strain C58)).